Consider the following 135-residue polypeptide: Snaclec echicetin subunit alpha (135 aa).

A signal peptide spans 1 to 4; sequence GADE. Disulfide bonds link cysteine 6–cysteine 17, cysteine 34–cysteine 129, and cysteine 104–cysteine 121. The C-type lectin domain occupies 13–130; that stretch reads NGVYCYMLFK…CENTFPFMCK (118 aa).

Belongs to the snaclec family. As to quaternary structure, heterodimer of subunits alpha and beta; disulfide-linked. In terms of tissue distribution, expressed by the venom gland.

The protein localises to the secreted. In terms of biological role, binding of echicetin to GPIbalpha (GP1BA) receptor on platelets alone results in inhibition of platelet aggregation, while binding to both GP1BA receptor and IgMk promotes platelet aggregation and signal transduction. This Echis carinatus (Saw-scaled viper) protein is Snaclec echicetin subunit alpha.